The primary structure comprises 839 residues: ABC transporter A family member 7 (839 aa).

The next 7 membrane-spanning stretches (helical) occupy residues 30–50 (GVQIAIPMALVIVLVILKLWI), 238–258 (IASLLGGSFFPFALSFVLPLF), 286–306 (IMTFIFNFLTYVVIVSVISLI), 321–341 (FALFLLLFLWGLSMVSFAFFL), 352–372 (SIFGYFFVMVMVNLNSTLSLF), 378–398 (VFYYWVPILAFSRGISTLCGL), and 419–439 (ILFWLFIDTIVYLTLAVYLDK). The region spanning 525-756 (LIVQGLRKQF…FGDGYSVRID (232 aa)) is the ABC transporter domain. 559–566 (GPNGAGKT) is a binding site for ATP.

Belongs to the ABC transporter superfamily. ABCA family.

Its subcellular location is the membrane. The chain is ABC transporter A family member 7 (abcA7) from Dictyostelium discoideum (Social amoeba).